A 348-amino-acid chain; its full sequence is Uroporphyrinogen decarboxylase (348 aa).

Substrate-binding positions include R27–R31, F46, D76, Y152, S207, and H320.

Belongs to the uroporphyrinogen decarboxylase family. Homodimer.

It is found in the cytoplasm. It carries out the reaction uroporphyrinogen III + 4 H(+) = coproporphyrinogen III + 4 CO2. The protein operates within porphyrin-containing compound metabolism; protoporphyrin-IX biosynthesis; coproporphyrinogen-III from 5-aminolevulinate: step 4/4. Catalyzes the decarboxylation of four acetate groups of uroporphyrinogen-III to yield coproporphyrinogen-III. This chain is Uroporphyrinogen decarboxylase, found in Bacillus cereus (strain G9842).